The sequence spans 466 residues: Gamma-glutamylpolyamine synthetase GlnA3 (466 aa).

Residues 127-466 (GRTVLRRIVA…GVAAAYRWKY (340 aa)) enclose the GS catalytic domain. Mg(2+) contacts are provided by Glu151 and Glu153. Glu202 provides a ligand contact to ATP. Residues Glu207 and Glu214 each contribute to the Mg(2+) site. L-glutamate is bound at residue Gly259. His263 is a binding site for Mg(2+). Ser267 is a binding site for ATP. Arg316 and Arg334 together coordinate L-glutamate. Arg334 and Arg339 together coordinate ATP. Glu355 lines the Mg(2+) pocket.

Belongs to the glutamine synthetase family. Mg(2+) is required as a cofactor. In terms of tissue distribution, expressed in mycelium.

It catalyses the reaction spermine + L-glutamate + ATP = gamma-L-glutamylspermine + ADP + phosphate + H(+). The catalysed reaction is spermidine + L-glutamate + ATP = gamma-L-glutamylspermidine + ADP + phosphate + H(+). The enzyme catalyses putrescine + L-glutamate + ATP = gamma-L-glutamylputrescine + ADP + phosphate + H(+). It carries out the reaction cadaverine + L-glutamate + ATP = gamma-L-glutamylcadaverine + ADP + phosphate + H(+). It functions in the pathway amine and polyamine degradation; putrescine degradation. It participates in amine and polyamine degradation; spermidine degradation. Its pathway is amine and polyamine degradation; spermine degradation. In terms of biological role, involved in the catabolism of polyamines. Catalyzes the ATP-dependent gamma-glutamylation of polyamines. Substrates include putrescine, cadaverine, spermidine and spermine, with a preference for long-chain polyamines spermidine and spermine. Is not able to compensate for the loss of glutamine synthetases (GSs). No complementation of the L-glutamine auxotrophy of an E.coli glnA mutant. Involved in morphological differentiation and in the production of secondary metabolites. Together with GlnA2, enables survival of S.coelicolor under exposure to high local environmental polyamine concentrations, which is toxic to the cells. This is Gamma-glutamylpolyamine synthetase GlnA3 from Streptomyces coelicolor (strain ATCC BAA-471 / A3(2) / M145).